The following is a 604-amino-acid chain: UvrABC system protein C (604 aa).

The GIY-YIG domain maps to 15 to 92 (DLPGCYLMKN…IQKHQPYFNI (78 aa)). Residues 197-232 (ETVKKQLTKRMDQAAADLEFERAAELRDQLNYIEMT) enclose the UVR domain.

Belongs to the UvrC family. Interacts with UvrB in an incision complex.

It is found in the cytoplasm. The UvrABC repair system catalyzes the recognition and processing of DNA lesions. UvrC both incises the 5' and 3' sides of the lesion. The N-terminal half is responsible for the 3' incision and the C-terminal half is responsible for the 5' incision. The chain is UvrABC system protein C from Lactiplantibacillus plantarum (strain ATCC BAA-793 / NCIMB 8826 / WCFS1) (Lactobacillus plantarum).